Reading from the N-terminus, the 185-residue chain is Calcium and integrin-binding family member 4 (185 aa).

3 consecutive EF-hand domains span residues 62–95 (RVNP…FSEQ), 97–132 (CPSL…LLKS), and 138–174 (DLLM…SPDF). Ca(2+) is bound by residues D110, N112, N114, and D121.

In terms of assembly, interacts with ITGA2B (via C-terminus cytoplasmic tail region); the interaction is stabilized/increased in a calcium- and magnesium-dependent manner. Expressed weakly in megakaryocytes and endothelial cells.

The chain is Calcium and integrin-binding family member 4 (Cib4) from Mus musculus (Mouse).